A 679-amino-acid polypeptide reads, in one-letter code: Methionine--tRNA ligase (679 aa).

Residues 12-22 carry the 'HIGH' region motif; sequence PYANGAIHLGH. Zn(2+) is bound by residues Cys-143, Cys-146, Cys-156, and Cys-159. The 'KMSKS' region signature appears at 328-332; sequence KMSKS. An ATP-binding site is contributed by Lys-331. The tRNA-binding domain maps to 577-679; the sequence is DFAKLDLRVA…EGIRPGMQVK (103 aa).

It belongs to the class-I aminoacyl-tRNA synthetase family. MetG type 1 subfamily. As to quaternary structure, homodimer. Zn(2+) serves as cofactor.

Its subcellular location is the cytoplasm. It carries out the reaction tRNA(Met) + L-methionine + ATP = L-methionyl-tRNA(Met) + AMP + diphosphate. Is required not only for elongation of protein synthesis but also for the initiation of all mRNA translation through initiator tRNA(fMet) aminoacylation. The protein is Methionine--tRNA ligase of Actinobacillus pleuropneumoniae serotype 5b (strain L20).